The primary structure comprises 408 residues: Argininosuccinate synthase (408 aa).

ATP-binding positions include 8 to 16 (AYSGGLDTT) and Ala35. The L-citrulline site is built by Tyr86 and Ser91. ATP is bound at residue Gly116. Thr118, Asn122, and Asp123 together coordinate L-aspartate. Asn122 contributes to the L-citrulline binding site. Arg126, Ser177, Ser186, Glu263, and Tyr275 together coordinate L-citrulline.

The protein belongs to the argininosuccinate synthase family. Type 1 subfamily. In terms of assembly, homotetramer.

The protein resides in the cytoplasm. It carries out the reaction L-citrulline + L-aspartate + ATP = 2-(N(omega)-L-arginino)succinate + AMP + diphosphate + H(+). It functions in the pathway amino-acid biosynthesis; L-arginine biosynthesis; L-arginine from L-ornithine and carbamoyl phosphate: step 2/3. The chain is Argininosuccinate synthase from Lachnospira eligens (strain ATCC 27750 / DSM 3376 / VPI C15-48 / C15-B4) (Eubacterium eligens).